The chain runs to 330 residues: Zinc finger protein sdz-12 (330 aa).

C2H2-type zinc fingers lie at residues 27–48, 63–85, 91–113, 120–144, and 153–176; these read PQCQ…HMKH, FRCE…QITH, KKCS…LHNH, FDCP…LVNH, and APCG…HFDH. Residues 183–195 show a composition bias toward low complexity; sequence SAPAPTSSARLSP. Positions 183 to 203 are disordered; that stretch reads SAPAPTSSARLSPITVSTSGS. A C2H2-type 6 zinc finger spans residues 271–293; sequence FECKHCTIKFHDATMSIMHNALH.

Belongs to the krueppel C2H2-type zinc-finger protein family. In terms of tissue distribution, expressed in the somatic gonad.

In terms of biological role, together with ehn-3, may play a role in gonadogenesis. In Caenorhabditis elegans, this protein is Zinc finger protein sdz-12.